Here is a 92-residue protein sequence, read N- to C-terminus: Small ribosomal subunit protein uS19 (92 aa).

Belongs to the universal ribosomal protein uS19 family.

Functionally, protein S19 forms a complex with S13 that binds strongly to the 16S ribosomal RNA. The chain is Small ribosomal subunit protein uS19 from Corynebacterium efficiens (strain DSM 44549 / YS-314 / AJ 12310 / JCM 11189 / NBRC 100395).